The chain runs to 358 residues: Trace amine-associated receptor 7b (358 aa).

Residues methionine 1 to arginine 47 lie on the Extracellular side of the membrane. An N-linked (GlcNAc...) asparagine glycan is attached at asparagine 34. Disulfide bonds link cysteine 37/cysteine 201 and cysteine 120/cysteine 205. The helical transmembrane segment at leucine 48–valine 68 threads the bilayer. The Cytoplasmic segment spans residues methionine 69–asparagine 83. The helical transmembrane segment at phenylalanine 84–serine 104 threads the bilayer. At methionine 105–serine 125 the chain is on the extracellular side. A helical transmembrane segment spans residues phenylalanine 126 to isoleucine 147. Residues alanine 148–lysine 166 lie on the Cytoplasmic side of the membrane. The helical transmembrane segment at cysteine 167 to valine 187 threads the bilayer. The Extracellular portion of the chain corresponds to asparagine 188–glutamine 211. Asparagine 210 is a glycosylation site (N-linked (GlcNAc...) asparagine). Residues serine 212–tyrosine 232 form a helical membrane-spanning segment. The Cytoplasmic segment spans residues serine 233–threonine 274. A helical membrane pass occupies residues leucine 275–isoleucine 295. At aspartate 296–glutamate 309 the chain is on the extracellular side. The helical transmembrane segment at isoleucine 310–tryptophan 332 threads the bilayer. Topologically, residues phenylalanine 333–glutamate 358 are cytoplasmic.

Belongs to the G-protein coupled receptor 1 family.

Its subcellular location is the cell membrane. In terms of biological role, olfactory receptor specific for N,N-dimethylalkylamines trace amines, such as N,N-dimethylcyclohexylamine. Trace amine compounds are enriched in animal body fluids and act on trace amine-associated receptors (TAARs) to elicit both intraspecific and interspecific innate behaviors. Ligand-binding causes a conformation change that triggers signaling via G(s)-class of G alpha proteins (GNAL or GNAS). The polypeptide is Trace amine-associated receptor 7b (Rattus norvegicus (Rat)).